Here is a 449-residue protein sequence, read N- to C-terminus: GPI mannosyltransferase 2 (449 aa).

Over 1–7 (MTEKVTK) the chain is Cytoplasmic. Residues 8–28 (LALASRLIVLLVQLVANGALP) traverse the membrane as a helical segment. The Lumenal segment spans residues 29–82 (EHKPDVFRMPVSSDQNASWIDKVIKRCLGGLRHWDGEYFLHIAENLYSYENTLA). Asn44 is a glycosylation site (N-linked (GlcNAc...) asparagine). A helical transmembrane segment spans residues 83–103 (FYPLYPVVVRHVGQAVEAIGI). Residues 104–109 (SLSQES) are Cytoplasmic-facing. A helical membrane pass occupies residues 110 to 130 (ILLVVAVALNFWLFCESANLL). Residues 131–148 (FQLTQVLFNDLNKSWNAA) lie on the Lumenal side of the membrane. N-linked (GlcNAc...) asparagine glycosylation occurs at Asn142. A helical membrane pass occupies residues 149–169 (LIYCFNPATIFFTAAYSETFF). The Cytoplasmic segment spans residues 170 to 196 (AYSSLHLMLECSKPTGSFRYLRLGTAL). A helical membrane pass occupies residues 197–217 (AACLLCRSNGLITLGYPLYFF). At 218 to 235 (GRQLLLKNKEPNTCMQLT) the chain is on the lumenal side. A helical membrane pass occupies residues 236-256 (QMTLTILGAIGILHTYYFYIY). Residues 257–368 (RLYCLPNTRP…GFKELIRDHT (112 aa)) lie on the Cytoplasmic side of the membrane. Residues 369–389 (TFPFVLHAAILTLVCTVYVHI) traverse the membrane as a helical segment. Residues 390 to 423 (QVSTRLLASATPVFYWFAADHMPKTLAQLKLRSK) lie on the Lumenal side of the membrane. A helical transmembrane segment spans residues 424–444 (AGALFVWCTTYSLVGTVLFSN). The Cytoplasmic portion of the chain corresponds to 445–449 (NYPWT).

The protein belongs to the PIGV family.

The protein resides in the endoplasmic reticulum membrane. It functions in the pathway glycolipid biosynthesis; glycosylphosphatidylinositol-anchor biosynthesis. Its function is as follows. Mannosyltransferase involved in glycosylphosphatidylinositol-anchor biosynthesis. Transfers the second mannose to the glycosylphosphatidylinositol during GPI precursor assembly. Required for the GPI-mediated endoplasmic reticulum exit and proper targeting to the cell surface of chp. Required for GPI-mediated membrane attachment of chp, qsm and Cont. Essential for microvillar stability in the rhabdomere. This chain is GPI mannosyltransferase 2, found in Drosophila melanogaster (Fruit fly).